The sequence spans 390 residues: Adherens junction-associated protein 1 (390 aa).

The N-terminal stretch at Met1 to Ser37 is a signal peptide. Topologically, residues Glu38–Gln262 are extracellular. The interval Leu218–Asn253 is disordered. The chain crosses the membrane as a helical span at residues Ile263–Leu283. The interval Leu283 to Cys390 is targeting signals. The Cytoplasmic segment spans residues Lys284–Cys390.

The protein localises to the basolateral cell membrane. It localises to the apical cell membrane. It is found in the cell junction. The protein resides in the adherens junction. May play a role in cell adhesion and cell migration. The polypeptide is Adherens junction-associated protein 1 (ajap1) (Xenopus tropicalis (Western clawed frog)).